Here is a 368-residue protein sequence, read N- to C-terminus: MAQPTYHIACLPGDGIGPEVTRGAVTVLQAAAAAYGFRLEFSEYLVGGAAYDAVGTPFPDETRDACDRADAILFGAVGGPRYEGLPWDLRPEAGLLAIRKRYDLYANLRPILLYPPLKDASPLKNEIIGGGVDFIIVRELVGGIYFGEPRGIETLPDGTRRGVNTEVYTDAEIARIARMGFEIARGRRRRLTSVDKGNVMEAGKLWRTVVDEVAREFPDVEVEHLLADNAAMQILRRPGDFDVMLASNLFGDFLSDEAAMLTGSIGLLPSASLGAARNRFGLPKGFYEPIHGSAPDIAGQDRANPLAAILCGAMLLRHSLGREDAARAVEQAVAAVLEEGLRTADITVPGTAVLGTAAMARAVADRVH.

Position 79–92 (79–92 (GPRYEGLPWDLRPE)) interacts with NAD(+). Arg-99, Arg-109, Arg-138, and Asp-228 together coordinate substrate. Positions 228, 252, and 256 each coordinate Mg(2+). 292–304 (GSAPDIAGQDRAN) contributes to the NAD(+) binding site.

The protein belongs to the isocitrate and isopropylmalate dehydrogenases family. LeuB type 1 subfamily. As to quaternary structure, homodimer. It depends on Mg(2+) as a cofactor. The cofactor is Mn(2+).

It is found in the cytoplasm. It catalyses the reaction (2R,3S)-3-isopropylmalate + NAD(+) = 4-methyl-2-oxopentanoate + CO2 + NADH. The protein operates within amino-acid biosynthesis; L-leucine biosynthesis; L-leucine from 3-methyl-2-oxobutanoate: step 3/4. In terms of biological role, catalyzes the oxidation of 3-carboxy-2-hydroxy-4-methylpentanoate (3-isopropylmalate) to 3-carboxy-4-methyl-2-oxopentanoate. The product decarboxylates to 4-methyl-2 oxopentanoate. This Symbiobacterium thermophilum (strain DSM 24528 / JCM 14929 / IAM 14863 / T) protein is 3-isopropylmalate dehydrogenase.